The chain runs to 957 residues: Translation initiation factor IF-2 (957 aa).

Disordered regions lie at residues 34 to 282 and 311 to 367; these read KSHS…RVVK and SQSL…TIAG. A compositionally biased stretch (pro residues) spans 107 to 161; the sequence is PARPQPPQAPTRPTPPAPVAPKPVEPVAAKPPAPPAKPEPTPPRPVPTLVPPPTR. Over residues 163-188 the composition is skewed to basic and acidic residues; sequence TKKEEKVAATPPPRKELKEPPKKEKG. The segment covering 209–242 has biased composition (pro residues); sequence PPAPAKPPEMAPKPALPELQPPPKPVRAPNPPKP. Composition is skewed to basic and acidic residues over residues 250-259 and 266-275; these read LDDKSVSKVI and KDFDEEESKR. Positions 444 to 617 constitute a tr-type G domain; sequence RRPPVVTIMG…LLVAEVEDLY (174 aa). A G1 region spans residues 453 to 460; sequence GHVDHGKT. 453 to 460 contributes to the GTP binding site; it reads GHVDHGKT. The interval 478-482 is G2; sequence GITQH. The segment at 503–506 is G3; that stretch reads DTPG. GTP contacts are provided by residues 503-507 and 557-560; these read DTPGH and NKID. Positions 557 to 560 are G4; that stretch reads NKID. Positions 593–595 are G5; that stretch reads SAL.

Belongs to the TRAFAC class translation factor GTPase superfamily. Classic translation factor GTPase family. IF-2 subfamily.

The protein resides in the cytoplasm. In terms of biological role, one of the essential components for the initiation of protein synthesis. Protects formylmethionyl-tRNA from spontaneous hydrolysis and promotes its binding to the 30S ribosomal subunits. Also involved in the hydrolysis of GTP during the formation of the 70S ribosomal complex. The protein is Translation initiation factor IF-2 of Thermosynechococcus vestitus (strain NIES-2133 / IAM M-273 / BP-1).